A 308-amino-acid chain; its full sequence is uncharacterized protein (308 aa).

7 residues coordinate NADP(+): Leu-50, Asp-90, Asn-117, Tyr-182, Lys-186, Ile-222, and Thr-224. Tyr-182 acts as the Proton acceptor in catalysis. Lys-186 functions as the Lowers pKa of active site Tyr in the catalytic mechanism.

The protein belongs to the short-chain dehydrogenases/reductases (SDR) family.

This is an uncharacterized protein from Saccharomyces cerevisiae (strain ATCC 204508 / S288c) (Baker's yeast).